The primary structure comprises 496 residues: Probable cytosol aminopeptidase (496 aa).

Mn(2+) contacts are provided by Lys268 and Asp273. Lys280 is a catalytic residue. Mn(2+) contacts are provided by Asp291, Asp350, and Glu352. The active site involves Arg354.

It belongs to the peptidase M17 family. The cofactor is Mn(2+).

The protein localises to the cytoplasm. The enzyme catalyses Release of an N-terminal amino acid, Xaa-|-Yaa-, in which Xaa is preferably Leu, but may be other amino acids including Pro although not Arg or Lys, and Yaa may be Pro. Amino acid amides and methyl esters are also readily hydrolyzed, but rates on arylamides are exceedingly low.. The catalysed reaction is Release of an N-terminal amino acid, preferentially leucine, but not glutamic or aspartic acids.. Functionally, presumably involved in the processing and regular turnover of intracellular proteins. Catalyzes the removal of unsubstituted N-terminal amino acids from various peptides. The sequence is that of Probable cytosol aminopeptidase from Thioalkalivibrio sulfidiphilus (strain HL-EbGR7).